A 488-amino-acid polypeptide reads, in one-letter code: Inosine-5'-monophosphate dehydrogenase (488 aa).

CBS domains follow at residues 95 to 153 and 157 to 216; these read VISN…SIKI and MTQE…AKDE. Residues Asp250 and 300–302 contribute to the NAD(+) site; that span reads GIG. 2 residues coordinate K(+): Gly302 and Gly304. Ser305 provides a ligand contact to IMP. Cys307 contributes to the K(+) binding site. Cys307 (thioimidate intermediate) is an active-site residue. Residues 340 to 342, 363 to 364, and 387 to 391 each bind IMP; these read DGG, GS, and YRGMG. The Proton acceptor role is filled by Arg403. Position 417 (Glu417) interacts with IMP. The interval 468–488 is disordered; it reads GLAESHPHNIQITKESPNYSF. K(+) is bound by residues Glu471, Ser472, and His473. The segment covering 475 to 488 has biased composition (polar residues); that stretch reads HNIQITKESPNYSF.

This sequence belongs to the IMPDH/GMPR family. Homotetramer. K(+) serves as cofactor.

The enzyme catalyses IMP + NAD(+) + H2O = XMP + NADH + H(+). The protein operates within purine metabolism; XMP biosynthesis via de novo pathway; XMP from IMP: step 1/1. Mycophenolic acid (MPA) is a non-competitive inhibitor that prevents formation of the closed enzyme conformation by binding to the same site as the amobile flap. In contrast, mizoribine monophosphate (MZP) is a competitive inhibitor that induces the closed conformation. MPA is a potent inhibitor of mammalian IMPDHs but a poor inhibitor of the bacterial enzymes. MZP is a more potent inhibitor of bacterial IMPDH. Functionally, catalyzes the conversion of inosine 5'-phosphate (IMP) to xanthosine 5'-phosphate (XMP), the first committed and rate-limiting step in the de novo synthesis of guanine nucleotides, and therefore plays an important role in the regulation of cell growth. The sequence is that of Inosine-5'-monophosphate dehydrogenase from Staphylococcus aureus (strain Mu50 / ATCC 700699).